A 675-amino-acid chain; its full sequence is Pesticidal crystal protein Cry10Aa (675 aa).

The protein belongs to the delta endotoxin family.

In terms of biological role, promotes colloidosmotic lysis by binding to the midgut epithelial cells of mosquitos. Active on Aedes aegypti. This is Pesticidal crystal protein Cry10Aa (cry10Aa) from Bacillus thuringiensis subsp. israelensis.